The sequence spans 408 residues: Collagen and calcium-binding EGF domain-containing protein 1 (408 aa).

The first 35 residues, 1-35, serve as a signal peptide directing secretion; it reads MVPPPLPSRGGAAKRQLGKSLGPLLLLLALGHTWT. An EGF-like; calcium-binding domain is found at 135–176; it reads DIDECATSNTTLCAHICINTMGSYHCECREGYILEDDGRTCT. 3 disulfides stabilise this stretch: Cys139–Cys151, Cys147–Cys160, and Cys162–Cys175. Asn143 carries N-linked (GlcNAc...) asparagine glycosylation. Asn183 is a glycosylation site (N-linked (GlcNAc...) asparagine). Disordered regions lie at residues 246–335 and 361–408; these read YLPG…GPPG and HRTH…NFYP. 2 Collagen-like domains span residues 247–292 and 302–335; these read LPGP…PMGP and GRRGPVGPPGAPGRHGSKGERGAPGPPGSPGPPG. A compositionally biased stretch (pro residues) spans 272 to 281; that stretch reads PGMPGPPGQP. Residues 283–294 are compositionally biased toward low complexity; the sequence is PRGSMGPMGPSP. Residues 325–334 show a composition bias toward pro residues; sequence PGPPGSPGPP. Ser387 is a glycosylation site (O-linked (Xyl...) (chondroitin sulfate) serine). Over residues 390 to 402 the composition is skewed to basic and acidic residues; sequence DYSRRTEARDPEA.

Belongs to the CCBE1 family.

It is found in the secreted. Required for lymphangioblast budding and angiogenic sprouting from venous endothelium during embryogenesis. This Mus musculus (Mouse) protein is Collagen and calcium-binding EGF domain-containing protein 1 (Ccbe1).